A 448-amino-acid chain; its full sequence is Probable glycine dehydrogenase (decarboxylating) subunit 1 (448 aa).

It belongs to the GcvP family. N-terminal subunit subfamily. As to quaternary structure, the glycine cleavage system is composed of four proteins: P, T, L and H. In this organism, the P 'protein' is a heterodimer of two subunits.

The enzyme catalyses N(6)-[(R)-lipoyl]-L-lysyl-[glycine-cleavage complex H protein] + glycine + H(+) = N(6)-[(R)-S(8)-aminomethyldihydrolipoyl]-L-lysyl-[glycine-cleavage complex H protein] + CO2. In terms of biological role, the glycine cleavage system catalyzes the degradation of glycine. The P protein binds the alpha-amino group of glycine through its pyridoxal phosphate cofactor; CO(2) is released and the remaining methylamine moiety is then transferred to the lipoamide cofactor of the H protein. The chain is Probable glycine dehydrogenase (decarboxylating) subunit 1 from Bacillus velezensis (strain DSM 23117 / BGSC 10A6 / LMG 26770 / FZB42) (Bacillus amyloliquefaciens subsp. plantarum).